Reading from the N-terminus, the 787-residue chain is PAN2-PAN3 deadenylation complex subunit pan3 (787 aa).

Residues 1–20 (MNSGLTPSPSPAVAAAGPAG) are disordered. Residues 11–20 (PAVAAAGPAG) are compositionally biased toward low complexity. The C3H1-type zinc-finger motif lies at 23-51 (GSKLKFCRYYAKDRTCFYGDECQFLHDDQ). 3 disordered regions span residues 131 to 162 (EATYPRMQQRMTNSSSSPSLLNDSAKPYAAHD), 179 to 210 (TMSQRRKTPNPTASEFIPKGGSTSRLSNMSQS), and 226 to 291 (GGPT…PPST). 2 stretches are compositionally biased toward low complexity: residues 143-154 (NSSSSPSLLNDS) and 200-210 (STSRLSNMSQS). Positions 185-200 (KTPNPTASEFIPKGGS) match the PABPC-interacting motif-2 (PAM-2) motif. Residues 265-290 (TPNPANYMVPTSASTPVTNSVSQPPS) are compositionally biased toward polar residues. The pseudokinase domain stretch occupies residues 365–650 (QIDQADMPGV…SVNDIMPMIG (286 aa)). Residues arginine 422, 471–478 (DFHAGSET), and 545–546 (TK) each bind ATP. The stretch at 651–689 (ARFYTQLDAAQMRNDVIEEDLAKEVQNGRLFRLLAKLGT) forms a coiled coil. Positions 690 to 787 (INERPEFQKD…ELVAAANGQL (98 aa)) are knob domain.

Belongs to the protein kinase superfamily. PAN3 family. As to quaternary structure, homodimer. Forms a heterotrimer with a catalytic subunit pan2 to form the poly(A)-nuclease (PAN) deadenylation complex. Interacts (via PAM-2 motif) with poly(A)-binding protein pabpc1 (via PABC domain), conferring substrate specificity of the enzyme complex. Interacts with the GW182 family proteins tnrc6a, tnrc6b and tnrc6c.

Its subcellular location is the cytoplasm. The protein localises to the P-body. In terms of biological role, regulatory subunit of the poly(A)-nuclease (PAN) deadenylation complex, one of two cytoplasmic mRNA deadenylases involved in general and miRNA-mediated mRNA turnover. PAN specifically shortens poly(A) tails of RNA and the activity is stimulated by poly(A)-binding protein (PABP). PAN deadenylation is followed by rapid degradation of the shortened mRNA tails by the CCR4-NOT complex. Deadenylated mRNAs are then degraded by two alternative mechanisms, namely exosome-mediated 3'-5' exonucleolytic degradation, or deadenylation-dependent mRNA decaping and subsequent 5'-3' exonucleolytic degradation by XRN1. PAN3 acts as a positive regulator for PAN activity, recruiting the catalytic subunit PAN2 to mRNA via its interaction with RNA and PABP, and to miRNA targets via its interaction with GW182 family proteins. This chain is PAN2-PAN3 deadenylation complex subunit pan3, found in Xenopus tropicalis (Western clawed frog).